The following is a 98-amino-acid chain: MTMVYANIFLAFIMSLMGLLMYRSHLMSSLLCLEGMMLSLFVMMTVTILNNHFTLASMTPIILLVFAACEAALGLSLLVMVSNTYGTDYVQNLNLLQC.

Transmembrane regions (helical) follow at residues 1-21 (MTMVYANIFLAFIMSLMGLLM), 29-49 (SLLCLEGMMLSLFVMMTVTIL), and 61-81 (IILLVFAACEAALGLSLLVMV).

This sequence belongs to the complex I subunit 4L family. As to quaternary structure, core subunit of respiratory chain NADH dehydrogenase (Complex I) which is composed of 45 different subunits.

Its subcellular location is the mitochondrion inner membrane. It carries out the reaction a ubiquinone + NADH + 5 H(+)(in) = a ubiquinol + NAD(+) + 4 H(+)(out). Its function is as follows. Core subunit of the mitochondrial membrane respiratory chain NADH dehydrogenase (Complex I) which catalyzes electron transfer from NADH through the respiratory chain, using ubiquinone as an electron acceptor. Part of the enzyme membrane arm which is embedded in the lipid bilayer and involved in proton translocation. The protein is NADH-ubiquinone oxidoreductase chain 4L (MT-ND4L) of Mirounga angustirostris (Northern elephant seal).